Here is a 321-residue protein sequence, read N- to C-terminus: uncharacterized protein (321 aa).

An N-terminal signal peptide occupies residues 1–18 (MKKMKKLLLLLSASFAFS).

This is an uncharacterized protein from Aquifex aeolicus (strain VF5).